Consider the following 351-residue polypeptide: 1-acylglycerol-3-phosphate O-acyltransferase ABHD5 (351 aa).

Residues 79 to 184 (PLVLLHGFGG…LILVEPWGFP (106 aa)) enclose the AB hydrolase-1 domain. A Phosphoserine modification is found at Ser-124. The HXXXXD motif signature appears at 329-334 (HYVYAD).

Belongs to the peptidase S33 family. ABHD4/ABHD5 subfamily. Interacts with ADRP and PLIN. Interacts with PNPLA2. Interacts with PLIN5; promotes interaction with PNPLA2.

Its subcellular location is the cytoplasm. It is found in the lipid droplet. It carries out the reaction a 1-acyl-sn-glycero-3-phosphate + an acyl-CoA = a 1,2-diacyl-sn-glycero-3-phosphate + CoA. It catalyses the reaction 1-(9Z-octadecenoyl)-sn-glycero-3-phosphate + (9Z)-octadecenoyl-CoA = 1,2-di-(9Z-octadecenoyl)-sn-glycero-3-phosphate + CoA. The enzyme catalyses 1-(9Z-octadecenoyl)-sn-glycero-3-phosphate + hexadecanoyl-CoA = 1-(9Z)-octadecenoyl-2-hexadecanoyl-sn-glycero-3-phosphate + CoA. The catalysed reaction is 1-(9Z-octadecenoyl)-sn-glycero-3-phosphate + octadecanoyl-CoA = 1-(9Z-octadecenoyl)-2-octadecanoyl-sn-glycero-3-phosphate + CoA. It carries out the reaction 1-(9Z-octadecenoyl)-sn-glycero-3-phosphate + (5Z,8Z,11Z,14Z)-eicosatetraenoyl-CoA = 1-(9Z)-octadecenoyl-2-(5Z,8Z,11Z,14Z)-eicosatetraenoyl-sn-glycero-3-phosphate + CoA. It catalyses the reaction eicosanoyl-CoA + 1-(9Z-octadecenoyl)-sn-glycero-3-phosphate = 1-(9Z)-octadecenoyl-2-eicosanoyl-sn-glycero-3-phosphate + CoA. The enzyme catalyses 1-hexadecanoyl-sn-glycero-3-phosphate + (9Z)-octadecenoyl-CoA = 1-hexadecanoyl-2-(9Z-octadecenoyl)-sn-glycero-3-phosphate + CoA. The catalysed reaction is 1-octadecanoyl-sn-glycero-3-phosphate + (9Z)-octadecenoyl-CoA = 1-octadecanoyl-2-(9Z-octadecenoyl)-sn-glycero-3-phosphate + CoA. It carries out the reaction 1-(5Z,8Z,11Z,14Z-eicosatetraenoyl)-sn-glycero-3-phosphate + (9Z)-octadecenoyl-CoA = 1-(5Z,8Z,11Z,14Z)-eicosatetraenoyl-2-(9Z)-octadecenoyl-sn-glycero-3-phosphate + CoA. Its activity is regulated as follows. Acyltransferase activity is inhibited by detergents such as Triton X-100 and 3-[(3-cholamidopropyl)dimethylammonio]-1-propanesulfonate (CHAPS). Acyltransferase activity is inhibited by the presence of magnesium and calcium. Coenzyme A-dependent lysophosphatidic acid acyltransferase that catalyzes the transfer of an acyl group on a lysophosphatidic acid. Functions preferentially with 1-oleoyl-lysophosphatidic acid followed by 1-palmitoyl-lysophosphatidic acid, 1-stearoyl-lysophosphatidic acid and 1-arachidonoyl-lysophosphatidic acid as lipid acceptor. Functions preferentially with arachidonoyl-CoA followed by oleoyl-CoA as acyl group donors. Functions in phosphatidic acid biosynthesis. May regulate the cellular storage of triacylglycerol through activation of the phospholipase PNPLA2. Involved in keratinocyte differentiation. Regulates lipid droplet fusion. The protein is 1-acylglycerol-3-phosphate O-acyltransferase ABHD5 of Rattus norvegicus (Rat).